We begin with the raw amino-acid sequence, 353 residues long: Galectin-9 (353 aa).

Positions 17–147 constitute a Galectin 1 domain; that stretch reads FTGPIQGGLQ…CLKLSFITFQ (131 aa). A beta-D-galactoside-binding positions include N47, H60, R64, N74, and 81-87; that span reads WGPEERK. Residues 167–186 are disordered; it reads QFPRTPKGRKQKTQNFRPAH. The Galectin 2 domain maps to 225–353; the sequence is FYTPIPNGLY…GDIQLTHVQT (129 aa). Residues H265, R269, T279, and 285 to 291 each bind a beta-D-galactoside; that span reads WGQEERS.

As to quaternary structure, homodimer. In terms of tissue distribution, accentuated expression in liver and thymus of embryo, detected in embryonic heart, brain, lung, liver, and kidney. Highly expressed in adult thymus, small intestine, and liver, and to a lesser extent in lung, kidney, spleen, cardiac, and skeletal muscle. Barely detectable in brain and reticulocyte. Expressed in placenta, uterus and decidua during pregnancy. Expressed in CD4+ T-cells with higher levels in iTreg cells than other T-cell types and sustained high levels throughout iTreg cell differentiation (at protein level). Expressed in myeloid cells in lung. Constitutively expressed in microglia. Isoform 1 is expressed exclusively in the small intestine. Isoform 2 expression in decidua increases in pathological pregnancy from gestation day 7.5 to 13.5 and it is higher than in normal pregnancy. Isoform 3 expression in decidua is higher in normal pregnancy than in pathological pregnancy.

It localises to the cytoplasm. The protein localises to the nucleus. Its subcellular location is the secreted. Its function is as follows. Binds galactosides. Has high affinity for the Forssman pentasaccharide. Ligand for HAVCR2/TIM3. Binding to HAVCR2 induces T-helper type 1 lymphocyte (Th1) death. Also stimulates bactericidal activity in infected macrophages by causing macrophage activation and IL1B secretion which restricts intracellular bacterial growth. Ligand for P4HB; the interaction retains P4HB at the cell surface of Th2 T-helper cells, increasing disulfide reductase activity at the plasma membrane, altering the plasma membrane redox state and enhancing cell migration. Ligand for CD44; the interaction enhances binding of SMAD3 to the FOXP3 promoter, leading to up-regulation of FOXP3 expression and increased induced regulatory T (iTreg) cell stability and suppressive function. Promotes ability of mesenchymal stromal cells to suppress T-cell proliferation. Expands regulatory T-cells and induces cytotoxic T-cell apoptosis following virus infection. Activates ERK1/2 phosphorylation inducing cytokine (IL-6, IL-8, IL-12) and chemokine (CCL2) production in mast and dendritic cells. Inhibits degranulation and induces apoptosis of mast cells. Induces maturation and migration of dendritic cells. Inhibits natural killer (NK) cell function. Can transform NK cell phenotype from peripheral to decidual during pregnancy. Astrocyte derived galectin-9 enhances microglial TNF production. May play a role in thymocyte-epithelial interactions relevant to the biology of the thymus. May provide the molecular basis for urate flux across cell membranes, allowing urate that is formed during purine metabolism to efflux from cells and serving as an electrogenic transporter that plays an important role in renal and gastrointestinal urate excretion. Highly selective to the anion urate. In terms of biological role, acts as an eosinophil chemoattractant. It also inhibits angiogenesis. Suppresses IFNG production by natural killer cells. The chain is Galectin-9 (Lgals9) from Mus musculus (Mouse).